Here is a 195-residue protein sequence, read N- to C-terminus: Holliday junction branch migration complex subunit RuvA (195 aa).

The domain I stretch occupies residues 1 to 61; it reads MYEYLDGVVV…ENDQTLYGFK (61 aa). The domain II stretch occupies residues 62 to 139; it reads KAEDKELFLN…AVENEVGTLF (78 aa). The interval 139 to 143 is flexible linker; it reads FDLST. The domain III stretch occupies residues 144 to 195; sequence TSNQALDEALEALIALGYSEKEVKKLTKKLSEQTDRTTDQYISSGLKLLMKG.

This sequence belongs to the RuvA family. As to quaternary structure, homotetramer. Forms an RuvA(8)-RuvB(12)-Holliday junction (HJ) complex. HJ DNA is sandwiched between 2 RuvA tetramers; dsDNA enters through RuvA and exits via RuvB. An RuvB hexamer assembles on each DNA strand where it exits the tetramer. Each RuvB hexamer is contacted by two RuvA subunits (via domain III) on 2 adjacent RuvB subunits; this complex drives branch migration. In the full resolvosome a probable DNA-RuvA(4)-RuvB(12)-RuvC(2) complex forms which resolves the HJ.

Its subcellular location is the cytoplasm. The RuvA-RuvB-RuvC complex processes Holliday junction (HJ) DNA during genetic recombination and DNA repair, while the RuvA-RuvB complex plays an important role in the rescue of blocked DNA replication forks via replication fork reversal (RFR). RuvA specifically binds to HJ cruciform DNA, conferring on it an open structure. The RuvB hexamer acts as an ATP-dependent pump, pulling dsDNA into and through the RuvAB complex. HJ branch migration allows RuvC to scan DNA until it finds its consensus sequence, where it cleaves and resolves the cruciform DNA. The sequence is that of Holliday junction branch migration complex subunit RuvA from Pediococcus pentosaceus (strain ATCC 25745 / CCUG 21536 / LMG 10740 / 183-1w).